The chain runs to 29 residues: Dermaseptin-9TR (29 aa).

In terms of tissue distribution, expressed by the skin glands.

It localises to the secreted. In terms of biological role, has antimicrobial activity. The polypeptide is Dermaseptin-9TR (Phyllomedusa trinitatis (Trinidad leaf frog)).